The chain runs to 192 residues: Orotate phosphoribosyltransferase (192 aa).

Residues Arg84, Lys88, and 110–118 (DDVLTTGNS) each bind 5-phospho-alpha-D-ribose 1-diphosphate. Orotate contacts are provided by Thr114 and Arg142.

The protein belongs to the purine/pyrimidine phosphoribosyltransferase family. PyrE subfamily. In terms of assembly, homodimer. Mg(2+) serves as cofactor.

The enzyme catalyses orotidine 5'-phosphate + diphosphate = orotate + 5-phospho-alpha-D-ribose 1-diphosphate. The protein operates within pyrimidine metabolism; UMP biosynthesis via de novo pathway; UMP from orotate: step 1/2. In terms of biological role, catalyzes the transfer of a ribosyl phosphate group from 5-phosphoribose 1-diphosphate to orotate, leading to the formation of orotidine monophosphate (OMP). This chain is Orotate phosphoribosyltransferase, found in Pyrobaculum calidifontis (strain DSM 21063 / JCM 11548 / VA1).